A 580-amino-acid polypeptide reads, in one-letter code: Purine permease (580 aa).

The next 12 membrane-spanning stretches (helical) occupy residues 68–88, 107–127, 136–156, 184–204, 211–231, 263–283, 294–314, 385–405, 426–446, 447–467, 481–501, and 522–542; these read PLVLALLLGLQHALAMLAGVI, SQYLVSTSLIVSGLLSAVQMF, YYVGTGLVSVVGTSFATITVA, YGALLATSCLCSLLEIGLSFM, ALFPPIVTGPTVFLIGASLIG, LPWGSAEFIGLGFLVFATIIL, SCAVIVGLLVGCIVAAACGYF, LGNGITCLLAGLCTITPMSVF, CCFFLVVMGIFAKFAAALVAI, PSSVLGGMTTFLFSSVAISGV, FILTASFAVGMAATLVPDWFS, and LVMANGFAVTGFLGLLLNLIL.

This sequence belongs to the nucleobase:cation symporter-2 (NCS2) (TC 2.A.40) family.

It localises to the membrane. Its function is as follows. Able to transport with low efficiency all natural purines as well as purine analogs. This chain is Purine permease (uapC), found in Emericella nidulans (strain FGSC A4 / ATCC 38163 / CBS 112.46 / NRRL 194 / M139) (Aspergillus nidulans).